The sequence spans 432 residues: MKFSYSFVQVVSLLLSLSPSVEGFTRSRNDACKPNHPFRPLPPSQPRTKTCHVVSNGHGKDDSKNIMQALHKCNNGGKVVFDANKVYTVGTALDMTFLKHIDLEVLGKIQFTNDTDYWQAHSFKHGFQNATTFFQLGGQDVNVYGGGTFDGNGQVWYDLYAEDALILRPILFGIIGLKGGTIGPLKLRYSPQWYQLVANSSDVIFDGIDISGYSSSKNEAKNTDGWDTYRSDNIVIQNSVINNGDDCVSFKPNSTNIIVQNLHCNGSHGISVGSLGQYKGEVDIVQNVLVYNISMYNASDGARIKVWPGVSSAMSEDLQGGGGLGSVKNITYNQMYIENVDWAIEVTQCYGQKNLTLCNEHPSNLTISDIHFKNFRGTTSGKRDPDVGTIVCSSPNVCSDIHAENINVKSPKGTDEFVCTNVDKSLLDVNCA.

Residues 1–23 (MKFSYSFVQVVSLLLSLSPSVEG) form the signal peptide. Asn113, Asn129, and Asn199 each carry an N-linked (GlcNAc...) asparagine glycan. A PbH1 1 repeat occupies 231–252 (SDNIVIQNSVINNGDDCVSFKP). Asp245 acts as the Proton donor in catalysis. Cys247 and Cys264 are disulfide-bonded. Residues Asn253 and Asn265 are each glycosylated (N-linked (GlcNAc...) asparagine). PbH1 repeat units follow at residues 254 to 274 (STNI…SVGS), 285 to 306 (VQNV…RIKV), and 327 to 348 (VKNI…EVTQ). His268 is a catalytic residue. N-linked (GlcNAc...) asparagine glycans are attached at residues Asn292, Asn297, Asn329, Asn354, and Asn364. The stretch at 362 to 394 (PSNLTISDIHFKNFRGTTSGKRDPDVGTIVCSS) is one PbH1 5 repeat. A disulfide bridge connects residues Cys392 and Cys398.

The protein belongs to the glycosyl hydrolase 28 family.

It localises to the secreted. It catalyses the reaction [(1-&gt;4)-alpha-D-galacturonosyl](n) + H2O = alpha-D-galacturonate + [(1-&gt;4)-alpha-D-galacturonosyl](n-1). Specific in hydrolyzing the terminal glycosidic bond of polygalacturonic acid and oligogalacturonates. This chain is Probable exopolygalacturonase X (pgaX), found in Neosartorya fischeri (strain ATCC 1020 / DSM 3700 / CBS 544.65 / FGSC A1164 / JCM 1740 / NRRL 181 / WB 181) (Aspergillus fischerianus).